A 611-amino-acid polypeptide reads, in one-letter code: Protein Spindly (611 aa).

The stretch at 1 to 288 (MEESETVLKL…QFQSLQKQHA (288 aa)) forms a coiled coil. The span at 499–511 (LKEDSSLSTKEQD) shows a compositional bias: basic and acidic residues. Positions 499-611 (LKEDSSLSTK…PAATTQCPQQ (113 aa)) are disordered. Polar residues predominate over residues 549 to 567 (RNTNNCSVTSTSPRSASEE). Residues 570-583 (SESKRFDEEQEKRK) show a composition bias toward basic and acidic residues.

Belongs to the Spindly family.

The protein resides in the chromosome. The protein localises to the centromere. Its subcellular location is the kinetochore. Required for the localization of dynein and dynactin to the mitotic kintochore. Dynein is believed to control the initial lateral interaction between the kinetochore and spindle microtubules and to facilitate the subsequent formation of end-on kinetochore-microtubule attachments mediated by the NDC80 complex. May act as an adapter protein linking the dynein motor complex to various cargos. The protein is Protein Spindly (spdl1) of Xenopus tropicalis (Western clawed frog).